Reading from the N-terminus, the 310-residue chain is Porphobilinogen deaminase (310 aa).

An S-(dipyrrolylmethanemethyl)cysteine modification is found at cysteine 242.

The protein belongs to the HMBS family. In terms of assembly, monomer. Dipyrromethane is required as a cofactor.

It carries out the reaction 4 porphobilinogen + H2O = hydroxymethylbilane + 4 NH4(+). Its pathway is porphyrin-containing compound metabolism; protoporphyrin-IX biosynthesis; coproporphyrinogen-III from 5-aminolevulinate: step 2/4. Tetrapolymerization of the monopyrrole PBG into the hydroxymethylbilane pre-uroporphyrinogen in several discrete steps. This Shewanella oneidensis (strain ATCC 700550 / JCM 31522 / CIP 106686 / LMG 19005 / NCIMB 14063 / MR-1) protein is Porphobilinogen deaminase.